The chain runs to 303 residues: Recombination-associated protein RdgC (303 aa).

This sequence belongs to the RdgC family.

The protein localises to the cytoplasm. Its subcellular location is the nucleoid. Its function is as follows. May be involved in recombination. The sequence is that of Recombination-associated protein RdgC from Shewanella sediminis (strain HAW-EB3).